Reading from the N-terminus, the 179-residue chain is MKQFLDFLPLVVFFAFYKLYDIYAATSALIVATAIVLIYSWVRYRKIEKMALITFVLVAVFGGLTLFFHNDEFIKWKVTVIYALFAGALLISQWVMKKPLIQRMLGKELALPQQVWSKLNLAWALFFIVCGLANIYIAFWLPQNIWVNFKVFGLTALTLIFTLLSGVYIYRHLPQEDKS.

The next 5 membrane-spanning stretches (helical) occupy residues 22-42 (IYAA…YSWV), 50-70 (MALI…FFHN), 76-96 (WKVT…QWVM), 121-141 (LAWA…AFWL), and 149-169 (FKVF…GVYI).

Belongs to the YciB family.

The protein resides in the cell inner membrane. In terms of biological role, plays a role in cell envelope biogenesis, maintenance of cell envelope integrity and membrane homeostasis. This chain is Inner membrane-spanning protein YciB, found in Salmonella dublin (strain CT_02021853).